A 382-amino-acid chain; its full sequence is Na(+)/H(+) antiporter NhaA 2 (382 aa).

The next 11 helical transmembrane spans lie at 7-27 (MVLSETFPGILLIFFTFLALL), 58-78 (LDLWINDGLIAIFFLCIGLEL), 94-114 (SLPIFGALGGMITPALIFIAI), 124-144 (GWAIPTATDIAFAVGILMLLG), 153-173 (LFLLSLAIFDDLGAIVIIALF), 178-198 (LSALAIIICLFCIFALLLLNY), 199-219 (YHITHLSLYVLVGVVLWIAML), 255-275 (NPWVVYFILPLFAFANAGIDI), 291-311 (IILGLFLGKQLGVFTFCFIAI), 327-347 (FYGICILTGIGFTMSLFIDGL), and 361-381 (LAILVASFLSAIVGFIYLKIV).

Belongs to the NhaA Na(+)/H(+) (TC 2.A.33) antiporter family.

The protein resides in the cell inner membrane. It catalyses the reaction Na(+)(in) + 2 H(+)(out) = Na(+)(out) + 2 H(+)(in). Functionally, na(+)/H(+) antiporter that extrudes sodium in exchange for external protons. The sequence is that of Na(+)/H(+) antiporter NhaA 2 from Campylobacter jejuni (strain RM1221).